A 323-amino-acid chain; its full sequence is 8-oxo-dGDP phosphatase NUDT18 (323 aa).

A Nudix hydrolase domain is found at 37–167; the sequence is RLRKNVCYVV…DILHLVELAA (131 aa). L58 is a Mg(2+) binding site. The short motif at 76–97 is the Nudix box element; sequence GRMEPGETIVEALQREVKEEAG.

The protein belongs to the Nudix hydrolase family. It depends on Mn(2+) as a cofactor. Mg(2+) is required as a cofactor.

The enzyme catalyses 8-oxo-dGDP + H2O = 8-oxo-dGMP + phosphate + H(+). The catalysed reaction is 8-oxo-dADP + H2O = 8-oxo-dAMP + phosphate + H(+). It catalyses the reaction 2-oxo-dADP + H2O = 2-oxo-dAMP + phosphate + H(+). It carries out the reaction 8-oxo-GDP + H2O = 8-oxo-GMP + phosphate + H(+). In terms of biological role, mediates the hydrolysis of oxidized nucleoside diphosphate derivatives. Hydrolyzes 8-oxo-7,8-dihydroguanine (8-oxo-Gua)-containing deoxyribo- and ribonucleoside diphosphates to the monophosphates. Hydrolyzes 8-oxo-dGDP and 8-oxo-GDP with the same efficiencies. Also hydrolyzes 8-OH-dADP and 2-OH-dADP. Exhibited no or minimal hydrolysis activity against 8-oxo-dGTP, 8-oxo-GTP, dGTP, GTP, dGDP and GDP. Probably removes oxidized guanine nucleotides from both the DNA and RNA precursor pools. The sequence is that of 8-oxo-dGDP phosphatase NUDT18 from Homo sapiens (Human).